The following is a 475-amino-acid chain: MTTILTSTFRNLSTTSKWALRFSVRPLSCSSQVQSAPAVQTKSKKTLAKPNLKNIVVVEGVRIPFLLSGTSYKDLMPHDLARAALSGLLYRTNIPKDVVDYIIFGTVIQEVKTSNVAREAALGAGFSDKTPAHTVTMACISSNQAMTTAVGLIASGQCDVVVAGGVELMSDVPIRHSRNMRKMMLDLNKAKTLAQRLSLLTKFRLNFLSPELPAVAEFSTNETMGHSADRLAAAFAVSRMEQDKYALRSHSLAKKAQDEGHLSDIVPFKVPGKDTVSKDNGIRPSSLEQMAKLKPAFIKPYGTVTAANSSFLTDGASAMLIMSEDRALAMGYKPKAYLRDFIYVSQDPKDQLLLGPTYATPKVLEKAGLTMNDIDAFEFHEAFSGQILANFKAMDSDWFAQNYMGRKTKVGAPPLEKFNIWGGSLSLGHPFGATGCRLVMAAANRLRKDGGQYALVAACAAGGQGHAMIVEAYPK.

The transit peptide at 1–34 directs the protein to the mitochondrion; the sequence is MTTILTSTFRNLSTTSKWALRFSVRPLSCSSQVQ. N6-succinyllysine is present on Lys53. Lys73 bears the N6-acetyllysine; alternate mark. An N6-succinyllysine; alternate modification is found at Lys73. Cys139 (acyl-thioester intermediate) is an active-site residue. The stretch at 174 to 221 is an intramembrane region; that stretch reads IRHSRNMRKMMLDLNKAKTLAQRLSLLTKFRLNFLSPELPAVAEFSTN. The residue at position 189 (Lys189) is an N6-acetyllysine; alternate. Lys189 is modified (N6-succinyllysine; alternate). An N6-succinyllysine mark is found at Lys191, Lys273, and Lys292. N6-acetyllysine; alternate is present on Lys294. Position 294 is an N6-succinyllysine; alternate (Lys294). Lys299 carries the N6-acetyllysine modification. N6-acetyllysine; alternate is present on Lys333. Residue Lys333 is modified to N6-succinyllysine; alternate. 2 positions are modified to N6-acetyllysine: Lys349 and Lys362. The Proton donor/acceptor role is filled by Cys459.

It belongs to the thiolase-like superfamily. Thiolase family. In terms of assembly, heterotetramer of 2 alpha/HADHA and 2 beta/HADHB subunits; forms the mitochondrial trifunctional enzyme. Also purified as higher order heterooligomers including a 4 alpha/HADHA and 4 beta/HADHB heterooligomer which physiological significance remains unclear. The mitochondrial trifunctional enzyme interacts with MTLN. Interacts with RSAD2/viperin.

Its subcellular location is the mitochondrion. The protein resides in the mitochondrion inner membrane. The protein localises to the mitochondrion outer membrane. It localises to the endoplasmic reticulum. The enzyme catalyses an acyl-CoA + acetyl-CoA = a 3-oxoacyl-CoA + CoA. The catalysed reaction is butanoyl-CoA + acetyl-CoA = 3-oxohexanoyl-CoA + CoA. It carries out the reaction hexanoyl-CoA + acetyl-CoA = 3-oxooctanoyl-CoA + CoA. It catalyses the reaction octanoyl-CoA + acetyl-CoA = 3-oxodecanoyl-CoA + CoA. The enzyme catalyses decanoyl-CoA + acetyl-CoA = 3-oxododecanoyl-CoA + CoA. The catalysed reaction is dodecanoyl-CoA + acetyl-CoA = 3-oxotetradecanoyl-CoA + CoA. It carries out the reaction tetradecanoyl-CoA + acetyl-CoA = 3-oxohexadecanoyl-CoA + CoA. It participates in lipid metabolism; fatty acid beta-oxidation. Its function is as follows. Mitochondrial trifunctional enzyme catalyzes the last three of the four reactions of the mitochondrial beta-oxidation pathway. The mitochondrial beta-oxidation pathway is the major energy-producing process in tissues and is performed through four consecutive reactions breaking down fatty acids into acetyl-CoA. Among the enzymes involved in this pathway, the trifunctional enzyme exhibits specificity for long-chain fatty acids. Mitochondrial trifunctional enzyme is a heterotetrameric complex composed of two proteins, the trifunctional enzyme subunit alpha/HADHA carries the 2,3-enoyl-CoA hydratase and the 3-hydroxyacyl-CoA dehydrogenase activities, while the trifunctional enzyme subunit beta/HADHB described here bears the 3-ketoacyl-CoA thiolase activity. In Rattus norvegicus (Rat), this protein is Trifunctional enzyme subunit beta, mitochondrial (Hadhb).